The sequence spans 142 residues: Baculoviral IAP repeat-containing protein 5 (142 aa).

The BIR repeat unit spans residues 18 to 88 (RISTFKNWPF…KHSSGCAFLS (71 aa)). Position 20 is a phosphoserine; by AURKC (serine 20). N6-acetyllysine is present on lysine 23. A Phosphothreonine; by CDK1 and CDK15 modification is found at threonine 34. Threonine 48 is subject to Phosphothreonine. Zn(2+) is bound by residues cysteine 57, cysteine 60, histidine 77, and cysteine 84. Residues lysine 90, lysine 110, lysine 112, and lysine 115 each carry the N6-acetyllysine modification. A Phosphothreonine; by AURKB modification is found at threonine 117. An N6-acetyllysine modification is found at lysine 129.

The protein belongs to the IAP family. Monomer or homodimer. Exists as a homodimer in the apo state and as a monomer in the CPC-bound state. The monomer protects cells against apoptosis more efficiently than the dimer. Only the dimeric form is capable of enhancing tubulin stability in cells. When phosphorylated, interacts with LAMTOR5/HBXIP; the resulting complex binds pro-CASP9, as well as active CASP9, but much less efficiently. Component of the chromosomal passenger complex (CPC) composed of at least BIRC5/survivin, CDCA8/borealin, INCENP, AURKB or AURKC; in the complex forms a triple-helix bundle-based subcomplex with INCENP and CDCA8. Interacts with JTB. Interacts (via BIR domain) with histone H3 phosphorylated at 'Thr-3' (H3pT3). Interacts with EVI5. Interacts with GTP-bound RAN in both the S and M phases of the cell cycle. Interacts with USP9X. Interacts with tubulin. Interacts with BIRC2/c-IAP1. The acetylated form at Lys-129 interacts with STAT3. The monomeric form deacetylated at Lys-129 interacts with XPO1/CRM1. The monomeric form interacts with XIAP/BIRC4. Both the dimeric and monomeric form can interact with DIABLO/SMAC. Interacts with BIRC6/bruce. Interacts with FBXL7; this interaction facilitates the polyubiquitination and subsequent proteasomal degradation of BIRC5 by the SCF(FBXL7) E3 ubiquitin-protein ligase complex. Ubiquitinated by the Cul9-RING ubiquitin-protein ligase complex, leading to its degradation. Ubiquitination is required for centrosomal targeting. Deubiquitinated by USP35 or USP38; leading to stabilization. Post-translationally, acetylation at Lys-129 results in its homodimerization, while deacetylation promotes the formation of monomers which heterodimerize with XPO1/CRM1 which facilitates its nuclear export. The acetylated form represses STAT3 transactivation. The dynamic equilibrium between its acetylation and deacetylation at Lys-129 determines its interaction with XPO1/CRM1, its subsequent subcellular localization, and its ability to inhibit STAT3 transactivation. In terms of processing, in vitro phosphorylation at Thr-117 by AURKB prevents interaction with INCENP and localization to mitotic chromosomes. Phosphorylation at Thr-48 by CK2 is critical for its mitotic and anti-apoptotic activities. Phosphorylation at Thr-34 by CDK15 is critical for its anti-apoptotic activity. Phosphorylation at Ser-20 by AURKC is critical for regulation of proper chromosome alignment and segregation, and possibly cytokinesis.

The protein resides in the cytoplasm. The protein localises to the nucleus. It is found in the chromosome. Its subcellular location is the centromere. It localises to the cytoskeleton. The protein resides in the spindle. The protein localises to the kinetochore. It is found in the midbody. Multitasking protein that has dual roles in promoting cell proliferation and preventing apoptosis. Component of a chromosome passage protein complex (CPC) which is essential for chromosome alignment and segregation during mitosis and cytokinesis. Acts as an important regulator of the localization of this complex; directs CPC movement to different locations from the inner centromere during prometaphase to midbody during cytokinesis and participates in the organization of the center spindle by associating with polymerized microtubules. Involved in the recruitment of CPC to centromeres during early mitosis via association with histone H3 phosphorylated at 'Thr-3' (H3pT3) during mitosis. The complex with RAN plays a role in mitotic spindle formation by serving as a physical scaffold to help deliver the RAN effector molecule TPX2 to microtubules. May counteract a default induction of apoptosis in G2/M phase. The acetylated form represses STAT3 transactivation of target gene promoters. May play a role in neoplasia. Inhibitor of CASP3 and CASP7. Essential for the maintenance of mitochondrial integrity and function. This chain is Baculoviral IAP repeat-containing protein 5 (BIRC5), found in Sus scrofa (Pig).